The chain runs to 487 residues: N-succinylglutamate 5-semialdehyde dehydrogenase (487 aa).

221–226 (GSSRTG) is an NAD(+) binding site. Catalysis depends on residues Glu244 and Cys278.

This sequence belongs to the aldehyde dehydrogenase family. AstD subfamily.

It carries out the reaction N-succinyl-L-glutamate 5-semialdehyde + NAD(+) + H2O = N-succinyl-L-glutamate + NADH + 2 H(+). It participates in amino-acid degradation; L-arginine degradation via AST pathway; L-glutamate and succinate from L-arginine: step 4/5. Catalyzes the NAD-dependent reduction of succinylglutamate semialdehyde into succinylglutamate. In Pseudomonas putida (strain ATCC 700007 / DSM 6899 / JCM 31910 / BCRC 17059 / LMG 24140 / F1), this protein is N-succinylglutamate 5-semialdehyde dehydrogenase.